Here is a 214-residue protein sequence, read N- to C-terminus: Ribosomal RNA small subunit methyltransferase G (214 aa).

S-adenosyl-L-methionine is bound by residues Gly-81, Met-86, 132–133 (VE), and Arg-147.

This sequence belongs to the methyltransferase superfamily. RNA methyltransferase RsmG family.

Its subcellular location is the cytoplasm. It catalyses the reaction guanosine(527) in 16S rRNA + S-adenosyl-L-methionine = N(7)-methylguanosine(527) in 16S rRNA + S-adenosyl-L-homocysteine. Specifically methylates the N7 position of guanine in position 527 of 16S rRNA. This chain is Ribosomal RNA small subunit methyltransferase G, found in Pseudomonas aeruginosa (strain UCBPP-PA14).